Consider the following 121-residue polypeptide: Prefoldin subunit beta (121 aa).

The protein belongs to the prefoldin subunit beta family. Heterohexamer of two alpha and four beta subunits.

The protein resides in the cytoplasm. Its function is as follows. Molecular chaperone capable of stabilizing a range of proteins. Seems to fulfill an ATP-independent, HSP70-like function in archaeal de novo protein folding. This is Prefoldin subunit beta from Methanoculleus marisnigri (strain ATCC 35101 / DSM 1498 / JR1).